We begin with the raw amino-acid sequence, 175 residues long: Electron transport protein HydN (175 aa).

4Fe-4S ferredoxin-type domains lie at 2–32, 48–79, 80–109, and 124–157; these read NRFI…NQDC, KGVN…SRDK, GFVH…VVVR, and DKAE…CVDR. [4Fe-4S] cluster is bound by residues Cys12, Cys15, Cys18, Cys22, Cys58, Cys61, Cys66, Cys70, Cys89, Cys92, Cys95, Cys99, Cys131, Cys134, Cys143, and Cys147.

[4Fe-4S] cluster serves as cofactor.

Its function is as follows. Electron transport from formate to hydrogen. The sequence is that of Electron transport protein HydN (hydN) from Escherichia coli O157:H7.